The sequence spans 79 residues: RNA-binding protein Hfq (79 aa).

The Sm domain occupies 10 to 70; that stretch reads DVFLNTVRKQ…ISTIMPGQPV (61 aa).

It belongs to the Hfq family. In terms of assembly, homohexamer.

In terms of biological role, RNA chaperone that binds small regulatory RNA (sRNAs) and mRNAs to facilitate mRNA translational regulation in response to envelope stress, environmental stress and changes in metabolite concentrations. Also binds with high specificity to tRNAs. In Bartonella tribocorum (strain CIP 105476 / IBS 506), this protein is RNA-binding protein Hfq.